Reading from the N-terminus, the 445-residue chain is 3-phosphoshikimate 1-carboxyvinyltransferase (445 aa).

Residues 1–25 (MSHSDQTSPLEARKSAALSGTARVP) form a disordered region. Positions 28, 29, and 33 each coordinate 3-phosphoshikimate. K28 is a phosphoenolpyruvate binding site. Residues G101 and R129 each contribute to the phosphoenolpyruvate site. Positions 175, 177, 328, and 355 each coordinate 3-phosphoshikimate. Q177 lines the phosphoenolpyruvate pocket. The Proton acceptor role is filled by D328. Phosphoenolpyruvate-binding residues include R359 and R402.

It belongs to the EPSP synthase family. As to quaternary structure, monomer.

It localises to the cytoplasm. It catalyses the reaction 3-phosphoshikimate + phosphoenolpyruvate = 5-O-(1-carboxyvinyl)-3-phosphoshikimate + phosphate. It functions in the pathway metabolic intermediate biosynthesis; chorismate biosynthesis; chorismate from D-erythrose 4-phosphate and phosphoenolpyruvate: step 6/7. Its function is as follows. Catalyzes the transfer of the enolpyruvyl moiety of phosphoenolpyruvate (PEP) to the 5-hydroxyl of shikimate-3-phosphate (S3P) to produce enolpyruvyl shikimate-3-phosphate and inorganic phosphate. This chain is 3-phosphoshikimate 1-carboxyvinyltransferase, found in Rhodopseudomonas palustris (strain BisB5).